Consider the following 408-residue polypeptide: Argininosuccinate synthase (408 aa).

ATP-binding positions include 8–16 and alanine 35; that span reads AYSGGLDTT. Residues tyrosine 86 and serine 91 each contribute to the L-citrulline site. Glycine 116 is an ATP binding site. Residues threonine 118, asparagine 122, and aspartate 123 each contribute to the L-aspartate site. Residue asparagine 122 coordinates L-citrulline. Residues arginine 126, serine 177, serine 186, glutamate 263, and tyrosine 275 each coordinate L-citrulline.

It belongs to the argininosuccinate synthase family. Type 1 subfamily. In terms of assembly, homotetramer.

Its subcellular location is the cytoplasm. The enzyme catalyses L-citrulline + L-aspartate + ATP = 2-(N(omega)-L-arginino)succinate + AMP + diphosphate + H(+). It participates in amino-acid biosynthesis; L-arginine biosynthesis; L-arginine from L-ornithine and carbamoyl phosphate: step 2/3. The chain is Argininosuccinate synthase from Lachnospira eligens (strain ATCC 27750 / DSM 3376 / VPI C15-48 / C15-B4) (Eubacterium eligens).